We begin with the raw amino-acid sequence, 358 residues long: Phospho-N-acetylmuramoyl-pentapeptide-transferase (358 aa).

10 consecutive transmembrane segments (helical) span residues 24–44 (FRSIYAMITALLLAFIVGPWV), 73–93 (TMGGVLILVCIVVPTLLWADL), 95–115 (NVFIWLTLLIIVGYGVLGFVD), 134–154 (MFWQVLLAAGVGIFLFYLPGF), 169–189 (ELGILFIPFVTLVIVGASNAV), 197–217 (GLAIGPVAINAGTYLLFCYIA), 233–253 (GAGELAVLCGAMVGAGLGFLW), 261–281 (VFMGDVGSLSLGGALGTLAVL), 286–306 (ILLVIVGGVFVVEALSVIFQV), and 335–355 (KIIVRFWIITIILALVAISTL).

Belongs to the glycosyltransferase 4 family. MraY subfamily. The cofactor is Mg(2+).

It is found in the cell inner membrane. The catalysed reaction is UDP-N-acetyl-alpha-D-muramoyl-L-alanyl-gamma-D-glutamyl-meso-2,6-diaminopimeloyl-D-alanyl-D-alanine + di-trans,octa-cis-undecaprenyl phosphate = di-trans,octa-cis-undecaprenyl diphospho-N-acetyl-alpha-D-muramoyl-L-alanyl-D-glutamyl-meso-2,6-diaminopimeloyl-D-alanyl-D-alanine + UMP. Its pathway is cell wall biogenesis; peptidoglycan biosynthesis. Its function is as follows. Catalyzes the initial step of the lipid cycle reactions in the biosynthesis of the cell wall peptidoglycan: transfers peptidoglycan precursor phospho-MurNAc-pentapeptide from UDP-MurNAc-pentapeptide onto the lipid carrier undecaprenyl phosphate, yielding undecaprenyl-pyrophosphoryl-MurNAc-pentapeptide, known as lipid I. This chain is Phospho-N-acetylmuramoyl-pentapeptide-transferase, found in Geobacter sp. (strain M21).